The primary structure comprises 179 residues: Protein GrpE (179 aa).

A disordered region spans residues 1–23; it reads MSEEIKEQNVQDAQNENLAPDSV.

The protein belongs to the GrpE family. In terms of assembly, homodimer.

Its subcellular location is the cytoplasm. Its function is as follows. Participates actively in the response to hyperosmotic and heat shock by preventing the aggregation of stress-denatured proteins, in association with DnaK and GrpE. It is the nucleotide exchange factor for DnaK and may function as a thermosensor. Unfolded proteins bind initially to DnaJ; upon interaction with the DnaJ-bound protein, DnaK hydrolyzes its bound ATP, resulting in the formation of a stable complex. GrpE releases ADP from DnaK; ATP binding to DnaK triggers the release of the substrate protein, thus completing the reaction cycle. Several rounds of ATP-dependent interactions between DnaJ, DnaK and GrpE are required for fully efficient folding. This chain is Protein GrpE, found in Campylobacter curvus (strain 525.92).